A 219-amino-acid chain; its full sequence is Small ribosomal subunit protein uS3c (219 aa).

The KH type-2 domain maps to 47–119 (VRKYVRTAEN…KFIISLAEVE (73 aa)).

This sequence belongs to the universal ribosomal protein uS3 family. As to quaternary structure, part of the 30S ribosomal subunit.

The protein resides in the plastid. It is found in the chloroplast. In Staurastrum punctulatum (Green alga), this protein is Small ribosomal subunit protein uS3c (rps3).